The chain runs to 297 residues: uncharacterized protein (297 aa).

The disordered stretch occupies residues 1–29 (MAESKAKNMFQKLSLTPKRNHEHDAGRNI). Residues 19–29 (RNHEHDAGRNI) are compositionally biased toward basic and acidic residues.

This is an uncharacterized protein from Caenorhabditis elegans.